A 517-amino-acid chain; its full sequence is GMP synthase [glutamine-hydrolyzing] (517 aa).

One can recognise a Glutamine amidotransferase type-1 domain in the interval 9–199; sequence RILILDFGSQ…VLNACGCEGL (191 aa). Cys-86 acts as the Nucleophile in catalysis. Catalysis depends on residues His-173 and Glu-175. The region spanning 200–392 is the GMPS ATP-PPase domain; that stretch reads WTSASIIEDA…LGLPYNMLYR (193 aa). An ATP-binding site is contributed by 227–233; that stretch reads SGGVDSS.

As to quaternary structure, homodimer.

The catalysed reaction is XMP + L-glutamine + ATP + H2O = GMP + L-glutamate + AMP + diphosphate + 2 H(+). It functions in the pathway purine metabolism; GMP biosynthesis; GMP from XMP (L-Gln route): step 1/1. Catalyzes the synthesis of GMP from XMP. The sequence is that of GMP synthase [glutamine-hydrolyzing] from Vibrio atlanticus (strain LGP32) (Vibrio splendidus (strain Mel32)).